Consider the following 219-residue polypeptide: Mediator of RNA polymerase II transcription subunit 21 (219 aa).

Residues Ser86–Leu125 adopt a coiled-coil conformation. Residues Ser141–Ile219 are disordered. 2 stretches are compositionally biased toward basic and acidic residues: residues Ile166–Gly181 and Ser191–Lys204. Residues Ile210–Ile219 are compositionally biased toward polar residues.

The protein belongs to the Mediator complex subunit 21 family. As to quaternary structure, component of the Mediator complex.

Its subcellular location is the nucleus. Its function is as follows. Component of the Mediator complex, a coactivator involved in the regulated transcription of nearly all RNA polymerase II-dependent genes. Mediator functions as a bridge to convey information from gene-specific regulatory proteins to the basal RNA polymerase II transcription machinery. Mediator is recruited to promoters by direct interactions with regulatory proteins and serves as a scaffold for the assembly of a functional preinitiation complex with RNA polymerase II and the general transcription factors. The sequence is that of Mediator of RNA polymerase II transcription subunit 21 (SRB7) from Candida glabrata (strain ATCC 2001 / BCRC 20586 / JCM 3761 / NBRC 0622 / NRRL Y-65 / CBS 138) (Yeast).